Here is a 105-residue protein sequence, read N- to C-terminus: Hydrogen cyanide synthase subunit HcnA (105 aa).

The region spanning 16–97 is the 2Fe-2S ferredoxin-type domain; the sequence is ADMTISLNGQ…GMQVQTLSNR (82 aa). Residues Cys-60, Cys-65, Cys-68, and Cys-81 each contribute to the [2Fe-2S] cluster site.

Heterotrimer of HcnA, HcnB and HcnC.

The protein localises to the cell membrane. The catalysed reaction is glycine + 2 A = hydrogen cyanide + 2 AH2 + CO2. Its function is as follows. A three-component membrane-bound flavoenzyme that catalyzes the formation of hydrogen cyanide, a secondary metabolite, by transfer of electrons to a cyanide-resistant branch of the aerobic respiratory chain. Contributes to suppression of black root rot of tobacco. The chain is Hydrogen cyanide synthase subunit HcnA from Pseudomonas protegens (strain DSM 19095 / LMG 27888 / CFBP 6595 / CHA0).